Reading from the N-terminus, the 125-residue chain is Large ribosomal subunit protein bL12 (125 aa).

The protein belongs to the bacterial ribosomal protein bL12 family. Homodimer. Part of the ribosomal stalk of the 50S ribosomal subunit. Forms a multimeric L10(L12)X complex, where L10 forms an elongated spine to which 2 to 4 L12 dimers bind in a sequential fashion. Binds GTP-bound translation factors.

In terms of biological role, forms part of the ribosomal stalk which helps the ribosome interact with GTP-bound translation factors. Is thus essential for accurate translation. In Chelativorans sp. (strain BNC1), this protein is Large ribosomal subunit protein bL12.